The sequence spans 254 residues: Aspartate/glutamate leucyltransferase (254 aa).

Belongs to the R-transferase family. Bpt subfamily.

The protein resides in the cytoplasm. The enzyme catalyses N-terminal L-glutamyl-[protein] + L-leucyl-tRNA(Leu) = N-terminal L-leucyl-L-glutamyl-[protein] + tRNA(Leu) + H(+). The catalysed reaction is N-terminal L-aspartyl-[protein] + L-leucyl-tRNA(Leu) = N-terminal L-leucyl-L-aspartyl-[protein] + tRNA(Leu) + H(+). Functions in the N-end rule pathway of protein degradation where it conjugates Leu from its aminoacyl-tRNA to the N-termini of proteins containing an N-terminal aspartate or glutamate. This is Aspartate/glutamate leucyltransferase from Xylella fastidiosa (strain M23).